The chain runs to 306 residues: Ribosomal protein L11 methyltransferase (306 aa).

S-adenosyl-L-methionine is bound by residues threonine 139, glycine 173, aspartate 195, and asparagine 242.

This sequence belongs to the methyltransferase superfamily. PrmA family.

The protein localises to the cytoplasm. It catalyses the reaction L-lysyl-[protein] + 3 S-adenosyl-L-methionine = N(6),N(6),N(6)-trimethyl-L-lysyl-[protein] + 3 S-adenosyl-L-homocysteine + 3 H(+). Its function is as follows. Methylates ribosomal protein L11. The chain is Ribosomal protein L11 methyltransferase from Nostoc sp. (strain PCC 7120 / SAG 25.82 / UTEX 2576).